The following is a 395-amino-acid chain: Succinyl-diaminopimelate desuccinylase (395 aa).

Zn(2+) is bound at residue His-74. Residue Asp-76 is part of the active site. Asp-107 contributes to the Zn(2+) binding site. Glu-141 serves as the catalytic Proton acceptor. The Zn(2+) site is built by Glu-142, Glu-170, and His-368.

This sequence belongs to the peptidase M20A family. DapE subfamily. Homodimer. Zn(2+) serves as cofactor. Co(2+) is required as a cofactor.

It carries out the reaction N-succinyl-(2S,6S)-2,6-diaminopimelate + H2O = (2S,6S)-2,6-diaminopimelate + succinate. The protein operates within amino-acid biosynthesis; L-lysine biosynthesis via DAP pathway; LL-2,6-diaminopimelate from (S)-tetrahydrodipicolinate (succinylase route): step 3/3. Functionally, catalyzes the hydrolysis of N-succinyl-L,L-diaminopimelic acid (SDAP), forming succinate and LL-2,6-diaminopimelate (DAP), an intermediate involved in the bacterial biosynthesis of lysine and meso-diaminopimelic acid, an essential component of bacterial cell walls. This is Succinyl-diaminopimelate desuccinylase from Brucella melitensis biotype 2 (strain ATCC 23457).